The primary structure comprises 166 residues: Putative membrane protein 162 (166 aa).

Residue M1 is a topological domain, intravirion. A helical transmembrane segment spans residues 2–22 (YYPAVQVLIGIILVDNFNTEF). Topologically, residues 23-166 (LSSEKKNCKT…TIMGIARNIL (144 aa)) are virion surface.

This sequence belongs to the asfivirus envelope protein p22 family.

The protein localises to the virion membrane. It localises to the host cell membrane. The protein is Putative membrane protein 162 of African swine fever virus (isolate Tick/Malawi/Lil 20-1/1983) (ASFV).